The sequence spans 125 residues: Glycine cleavage system H protein (125 aa).

The region spanning 19–101 (VAVVGISDYA…EGKGWFMKLK (83 aa)) is the Lipoyl-binding domain. K60 carries the N6-lipoyllysine modification.

This sequence belongs to the GcvH family. The glycine cleavage system is composed of four proteins: P, T, L and H. It depends on (R)-lipoate as a cofactor.

In terms of biological role, the glycine cleavage system catalyzes the degradation of glycine. The H protein shuttles the methylamine group of glycine from the P protein to the T protein. This chain is Glycine cleavage system H protein, found in Xanthobacter autotrophicus (strain ATCC BAA-1158 / Py2).